We begin with the raw amino-acid sequence, 853 residues long: FIGNL1-interacting regulator of recombination and mitosis (853 aa).

Residues Ser-43 and Ser-744 each carry the phosphoserine; by PLK1 modification. Lys-792 bears the N6-acetyllysine mark.

As to quaternary structure, interacts (via its N-terminal region) with PLK1; controls PLK1 kinase activity. Interacts (via the KVVXF motif) with PPP1CC; controls PLK1 kinase activity. Interacts with FIGNL1; may regulate homologous recombination. Phosphorylation at Ser-43 by PLK1 strengthens FIRRM-PLK1 interaction. Phosphorylation at Ser-744 by PLK1 negatively regulates its interaction with PPP1CC.

It is found in the chromosome. It localises to the centromere. The protein localises to the kinetochore. The protein resides in the nucleus. Its subcellular location is the midbody. It is found in the cytoplasm. It localises to the cytoskeleton. The protein localises to the spindle. Its function is as follows. Regulates PLK1 kinase activity at kinetochores and promotes faithful chromosome segregation in prometaphase by bridging kinase and phosphatase activities. Phosphorylation of FIRRM by PLK1 negatively regulates its interaction with the phosphatase, PPP1CC, thus creating a negative feedback loop for maintaining proper PLK1 kinase activity during mitosis. In complex with FIGL1 may regulate homologous recombination. In Homo sapiens (Human), this protein is FIGNL1-interacting regulator of recombination and mitosis.